We begin with the raw amino-acid sequence, 204 residues long: MPFELPALPYPYDALEPHIDKETMNIHHTKHHNTYVTNLNAALEGHPDLQNKSLEELLSNLEALPESIRTAVRNNGGGHANHSLFWTILSPNGGGEPTGELADAINKKFGSFTAFKDEFSKAAAGRFGSGWAWLVVNNGELEITSTPNQDSPIMEGKTPILGLDVWEHAYYLKYQNRRPEYIAAFWNVVNWDEVAKRYSEAKAK.

A Mn(2+)-binding site is contributed by His-27. Phosphothreonine occurs at positions 34 and 70. The Mn(2+) site is built by His-82, Asp-164, and His-168.

The protein belongs to the iron/manganese superoxide dismutase family. As to quaternary structure, homodimer. Mn(2+) serves as cofactor.

The enzyme catalyses 2 superoxide + 2 H(+) = H2O2 + O2. Destroys superoxide anion radicals which are normally produced within the cells and which are toxic to biological systems. The protein is Superoxide dismutase [Mn] (sodA) of Geobacillus stearothermophilus (Bacillus stearothermophilus).